We begin with the raw amino-acid sequence, 358 residues long: Peptide chain release factor 1 (358 aa).

Q237 is subject to N5-methylglutamine.

It belongs to the prokaryotic/mitochondrial release factor family. Post-translationally, methylated by PrmC. Methylation increases the termination efficiency of RF1.

It is found in the cytoplasm. Its function is as follows. Peptide chain release factor 1 directs the termination of translation in response to the peptide chain termination codons UAG and UAA. The polypeptide is Peptide chain release factor 1 (Streptomyces avermitilis (strain ATCC 31267 / DSM 46492 / JCM 5070 / NBRC 14893 / NCIMB 12804 / NRRL 8165 / MA-4680)).